The following is a 207-amino-acid chain: Serotonin N-acetyltransferase (207 aa).

The tract at residues 1 to 28 is disordered; sequence MSMQSTHPPKPEAPRLPPGIPESPSCQR. At threonine 31 the chain carries Phosphothreonine; by PKA. Positions 35–202 constitute an N-acetyltransferase domain; it reads SEFRCLTPED…CSLRDHPFLR (168 aa). Position 124 (leucine 124) interacts with substrate. Acetyl-CoA contacts are provided by residues 124-126 and 132-137; these read LAV and QQGRGP. Substrate is bound at residue methionine 159. 168–170 serves as a coordination point for acetyl-CoA; it reads YER. A Phosphoserine modification is found at serine 205.

This sequence belongs to the acetyltransferase family. AANAT subfamily. In terms of assembly, monomer. Interacts with several 14-3-3 proteins, including YWHAB, YWHAE, YWHAG and YWHAZ, preferentially when phosphorylated at Thr-31. Phosphorylation on Ser-205 also allows binding to YWHAZ, but with lower affinity. The interaction with YWHAZ considerably increases affinity for arylalkylamines and acetyl-CoA and protects the enzyme from dephosphorylation and proteasomal degradation. It may also prevent thiol-dependent inactivation. Post-translationally, cAMP-dependent phosphorylation on both N-terminal Thr-31 and C-terminal Ser-205 regulates AANAT activity by promoting interaction with 14-3-3 proteins.

Its subcellular location is the cytoplasm. It catalyses the reaction a 2-arylethylamine + acetyl-CoA = an N-acetyl-2-arylethylamine + CoA + H(+). The protein operates within aromatic compound metabolism; melatonin biosynthesis; melatonin from serotonin: step 1/2. In terms of biological role, controls the night/day rhythm of melatonin production in the pineal gland. Catalyzes the N-acetylation of serotonin into N-acetylserotonin, the penultimate step in the synthesis of melatonin. This chain is Serotonin N-acetyltransferase (AANAT), found in Pan troglodytes (Chimpanzee).